Consider the following 259-residue polypeptide: Gene 2 protein (259 aa).

Composition is skewed to basic and acidic residues over residues M1–E12 and Q21–K36. Residues M1 to K36 are disordered.

This is Gene 2 protein (2) from Mycobacterium (Mycobacteriophage L5).